Here is a 171-residue protein sequence, read N- to C-terminus: UPF0316 protein EAT1b_0871 (171 aa).

The next 3 membrane-spanning stretches (helical) occupy residues 4–24, 32–52, and 57–77; these read ILLI…RTIM, IAGL…GIVF, and TVGM…GGFV.

This sequence belongs to the UPF0316 family.

It localises to the cell membrane. This is UPF0316 protein EAT1b_0871 from Exiguobacterium sp. (strain ATCC BAA-1283 / AT1b).